The primary structure comprises 657 residues: Penicillin-binding protein activator LpoA (657 aa).

The first 25 residues, M1–A25, serve as a signal peptide directing secretion. C26 is lipidated: N-palmitoyl cysteine. C26 is lipidated: S-diacylglycerol cysteine.

It belongs to the LpoA family. In terms of assembly, interacts with PBP1a.

The protein resides in the cell outer membrane. Its function is as follows. Regulator of peptidoglycan synthesis that is essential for the function of penicillin-binding protein 1A (PBP1a). The polypeptide is Penicillin-binding protein activator LpoA (Yersinia pseudotuberculosis serotype O:1b (strain IP 31758)).